The sequence spans 88 residues: Large ribosomal subunit protein bL27 (88 aa).

The interval 1 to 23 (MAHKKAGGSSRNGRDSAGRRLGV) is disordered.

This sequence belongs to the bacterial ribosomal protein bL27 family.

The protein is Large ribosomal subunit protein bL27 of Methylorubrum extorquens (strain CM4 / NCIMB 13688) (Methylobacterium extorquens).